Here is a 953-residue protein sequence, read N- to C-terminus: Catenin alpha-2 (953 aa).

Position 632 is a phosphothreonine (T632). 3 positions are modified to phosphoserine: S640, S651, and S901. A compositionally biased stretch (basic and acidic residues) spans E912–T927. Positions E912–S939 are disordered. Basic residues predominate over residues R928–I938. Residue S939 is modified to Phosphoserine.

This sequence belongs to the vinculin/alpha-catenin family. As to quaternary structure, interacts with CDH1 and CDH2. Interacts with ZNF639; recruits CTNNA2 to the nucleus. Interacts with F-actin. As to expression, expressed in neural tissues, with strongest expression in fetal and adult brain. Expressed in the developing cortical plate and marginal zone of 20-week-old human fetal brain.

It is found in the cell membrane. Its subcellular location is the cytoplasm. The protein localises to the cytoskeleton. The protein resides in the cell junction. It localises to the adherens junction. It is found in the cell projection. Its subcellular location is the axon. The protein localises to the nucleus. May function as a linker between cadherin adhesion receptors and the cytoskeleton to regulate cell-cell adhesion and differentiation in the nervous system. Required for proper regulation of cortical neuronal migration and neurite growth. It acts as a negative regulator of Arp2/3 complex activity and Arp2/3-mediated actin polymerization. It thereby suppresses excessive actin branching which would impair neurite growth and stability. Regulates morphological plasticity of synapses and cerebellar and hippocampal lamination during development. Functions in the control of startle modulation. The sequence is that of Catenin alpha-2 (CTNNA2) from Homo sapiens (Human).